Consider the following 154-residue polypeptide: Transcriptional repressor NrdR (154 aa).

Residues 3-34 (CPYCRHPDSRVVDSREADDGQLIRRRRSCPEC) fold into a zinc finger. Residues 46–136 (LAVVKRSGVT…VYRSFESLAD (91 aa)) enclose the ATP-cone domain.

The protein belongs to the NrdR family. The cofactor is Zn(2+).

In terms of biological role, negatively regulates transcription of bacterial ribonucleotide reductase nrd genes and operons by binding to NrdR-boxes. The polypeptide is Transcriptional repressor NrdR (Salinispora tropica (strain ATCC BAA-916 / DSM 44818 / JCM 13857 / NBRC 105044 / CNB-440)).